The following is a 7968-amino-acid chain: Obscurin (7968 aa).

5 Ig-like domains span residues 10-100, 110-202, 236-322, 331-414, and 420-508; these read PRFL…LQVD, PHFL…LVVD, PASP…QTYS, PAVP…RTVA, and GNLL…VSAP. Residues C31 and C82 are joined by a disulfide bond. The disordered stretch occupies residues 228–249; that stretch reads EAMRAEGAPASPPSTGTRTCTV. The segment covering 240–249 has biased composition (polar residues); that stretch reads PSTGTRTCTV. 2 cysteine pairs are disulfide-bonded: C259–C311 and C354–C404. S395 is modified (phosphoserine). The region spanning 515–612 is the Fibronectin type-III 1 domain; it reads PPVDPVVKAR…FPGTVHLAPK (98 aa). 12 consecutive Ig-like domains span residues 619-698, 701-790, 798-884, 886-977, 978-1066, 1070-1161, 1162-1252, 1254-1345, 1346-1432, 1438-1524, 1530-1621, and 1622-1719; these read LKAV…MEVR, PGLT…YQLS, LHKD…LRVS, PKVV…DVKE, PKVV…FRLH, PKMM…HITE, PKGV…LHIT, PKAV…DVSE, PKAV…LSFS, PKVV…LSFH, PKAV…HVAE, and PKVV…PQIS. Intrachain disulfides connect C819-C870, C912-C962, C1004-C1054, C1096-C1146, C1188-C1238, C1280-C1330, C1372-C1422, C1464-C1514, C1556-C1606, C1648-C1698, C1723-C1791, and C1830-C1880. Residues 1731-1808 enclose the Fibronectin type-III 2 domain; that stretch reads KEHEDIILTA…DFPVQVEEVA (78 aa). Ig-like domains lie at 1809-1894, 1896-1982, 1987-2071, 2077-2162, 2165-2249, 2289-2380, 2468-2559, 2564-2643, 2646-2730, 2736-2823, 2826-2908, 2920-2999, 3003-3092, 3095-3183, 3184-3268, 3273-3356, 3359-3444, 3449-3532, 3537-3620, 3625-3708, 3713-3796, 3801-3884, 3890-3973, 3978-4062, 4068-4160, 4171-4239, 4248-4337, 4340-4427, and 4430-4518; these read AKFC…LTVS, PRVV…AALR, PVLF…AKLT, VRLV…LVVT, PVSF…ASVK, PVTL…QSIT, PVVL…REVT, LQDA…LEVR, PVVF…ARVR, VGIT…LIVR, PAAI…STAS, EELT…AQLL, RRVH…LRVT, PSVF…VHAR, PVRF…ATLT, PAQF…ASLT, PMPA…ATLT, PAKF…ATLT, PARF…AMLT, PIKF…AMLT, PSKF…ATLT, PARF…ATLT, PVFR…ATLT, PVRF…ASLS, PKFK…PEVT, TADE…NHAS, PEVT…LKVT, NTVV…FLTV, and WRLE…ARLT. Intrachain disulfides connect C2187-C2237, C2311-C2361, and C2490-C2540. A disulfide bridge connects residues C2668 and C2718. Intrachain disulfides connect C2848-C2898 and C2937-C2987. At S2889 the chain carries Phosphoserine. Disulfide bonds link C3117–C3167, C3206–C3256, C3295–C3344, C3383–C3432, C3471–C3520, C3559–C3608, C3647–C3696, C3735–C3784, C3823–C3872, C3911–C3961, C4000–C4050, and C4089–C4141. S4015 carries the post-translational modification Phosphoserine. C4453 and C4508 are oxidised to a cystine. Positions 4525–4619 constitute a Fibronectin type-III 3 domain; it reads PPEDAEVVAR…LPQTVRLAEP (95 aa). One can recognise an Ig-like 47 domain in the interval 4624-4714; the sequence is PPQPSAPESR…AAATFQVALS (91 aa). A disordered region spans residues 4749 to 4785; the sequence is MSREPTLDSISELPEEDGRSQRLPQEAEEVAPDLSEG. The residue at position 4750 (S4750) is a Phosphoserine. A Phosphothreonine modification is found at T4754. At S4757 the chain carries Phosphoserine. The residue at position 4788 (T4788) is a Phosphothreonine. Residue S4805 is modified to Phosphoserine. Positions 4820 to 4860 are disordered; that stretch reads LKKAGRPGTSPLASKVGAPAAPSVKPQQQQEPLAAVRPPLG. The region spanning 4872–4901 is the IQ domain; that stretch reads MDKAAVKIQAAFKGYKVRKEMKQQEGPMFS. Ig-like domains lie at 4898 to 4989 and 5126 to 5215; these read PMFS…VVVS and PVFL…AELR. 2 cysteine pairs are disulfide-bonded: C4919/C4971 and C5147/C5199. Positions 5238 to 5256 are enriched in polar residues; that stretch reads AQGYLSSREQEGTESTTDE. The interval 5238–5257 is disordered; it reads AQGYLSSREQEGTESTTDEG. Ig-like domains are found at residues 5260 to 5349 and 5371 to 5467; these read PQVV…ARLL and PRML…LHVS. Positions 5554–5596 are disordered; the sequence is AKLQVPGGDSDEDSKTPSASPRHGRSRPSSSIQESSSESEDGD. Phosphoserine is present on S5563. T5569 bears the Phosphothreonine mark. The segment covering 5570-5589 has biased composition (low complexity); that stretch reads PSASPRHGRSRPSSSIQESS. Phosphoserine is present on residues S5571 and S5573. The 68-residue stretch at 5600–5667 folds into the SH3 domain; that stretch reads EIFDIYVVTA…SPAYLDRRLK (68 aa). Positions 5693 to 5877 constitute a DH domain; it reads RLSSVIQELL…SALPQRAENK (185 aa). The PH domain maps to 5895–6004; the sequence is EPIRQGHFIV…WVKEICGIQQ (110 aa). An a 1,2-diacyl-sn-glycero-3-phospho-(1D-myo-inositol-4,5-bisphosphate)-binding site is contributed by R5975. A 1,2-diacyl-sn-glycero-3-phospho-(1D-myo-inositol-3,4-bisphosphate) is bound at residue R5980. Ig-like domains are found at residues 6014–6097 and 6108–6200; these read PDFE…GNCS and PRFV…LRIQ. 2 disulfide bridges follow: C6035-C6087 and C6129-C6182. Residues 6237-6296 are disordered; sequence RLLGPKAPGPSTGDLTGPGPCPRGAPALQETGSQPPVTGTSEAPAVPPRVPQPLLHEGPE. Residues 6266-6277 show a composition bias toward polar residues; that stretch reads ETGSQPPVTGTS. Residues 6357 to 6445 enclose the Ig-like 54 domain; it reads PSMQVTIEDV…GQVLCKAELL (89 aa). The Protein kinase 1 domain occupies 6468-6721; sequence YEVKEEIGRG…AAQCLSHPWF (254 aa). ATP contacts are provided by residues 6474–6482 and K6497; that span reads IGRGVFGFV. The active-site Proton acceptor is the D6587. Disordered regions lie at residues 6777-6863, 6952-7176, and 7217-7272; these read GVAR…AQGC, SGTH…TMRK, and VSQS…TPWE. At S6831 the chain carries Phosphoserine. Residues 7052–7061 show a composition bias toward pro residues; sequence AVAPCPPGSF. Residues 7115 to 7139 are compositionally biased toward low complexity; the sequence is SSPGSASQASSSQVSSLRVGSSQVG. Positions 7160-7172 are enriched in polar residues; the sequence is DSTPTLQRPQEQA. Residues 7227–7242 show a composition bias toward basic and acidic residues; it reads EARAESQSEEQQEARA. S7244 carries the post-translational modification Phosphoserine. An Ig-like 55 domain is found at 7463-7552; that stretch reads PTFLRELSDE…GTVTTTGVLR (90 aa). C7484 and C7536 form a disulfide bridge. Residues 7557–7649 form the Fibronectin type-III 4 domain; that stretch reads PSSSPCPDIG…PSEQVLLGGP (93 aa). In terms of domain architecture, Protein kinase 2 spans 7672 to 7924; it reads FAFQTQIQRG…ASSCLQCPWL (253 aa). ATP is bound by residues 7678–7686 and K7701; that span reads IQRGRFSVV. D7791 functions as the Proton acceptor in the catalytic mechanism.

This sequence belongs to the protein kinase superfamily. CAMK Ser/Thr protein kinase family. In terms of assembly, interacts (via protein kinase domain 2) with CDH2 and (via protein kinase domain 1) with ATP1B1. Isoform 3 interacts with TTN/titin and calmodulin. Isoform 3 interacts with ANK1 isoform Mu17/ank1.5. It depends on Mg(2+) as a cofactor. In terms of processing, autophosphorylated by protein kinase domains 1 and 2.

It localises to the cytoplasm. Its subcellular location is the myofibril. The protein resides in the sarcomere. The protein localises to the m line. It is found in the z line. It localises to the cell membrane. Its subcellular location is the sarcolemma. The protein resides in the nucleus. The catalysed reaction is L-seryl-[protein] + ATP = O-phospho-L-seryl-[protein] + ADP + H(+). It catalyses the reaction L-threonyl-[protein] + ATP = O-phospho-L-threonyl-[protein] + ADP + H(+). In terms of biological role, structural component of striated muscles which plays a role in myofibrillogenesis. Probably involved in the assembly of myosin into sarcomeric A bands in striated muscle. Has serine/threonine protein kinase activity and phosphorylates N-cadherin CDH2 and sodium/potassium-transporting ATPase subunit ATP1B1. Binds (via the PH domain) strongly to phosphatidylinositol 3,4-bisphosphate (PtdIns(3,4)P2) and phosphatidylinositol 4,5-bisphosphate (PtdIns(4,5)P2), and to a lesser extent to phosphatidylinositol 3-phosphate (PtdIns(3)P), phosphatidylinositol 4-phosphate (PtdIns(4)P), phosphatidylinositol 5-phosphate (PtdIns(5)P) and phosphatidylinositol 3,4,5-trisphosphate (PtdIns(3,4,5)P3). This is Obscurin (OBSCN) from Homo sapiens (Human).